A 59-amino-acid polypeptide reads, in one-letter code: Large ribosomal subunit protein uL30 (59 aa).

Belongs to the universal ribosomal protein uL30 family. As to quaternary structure, part of the 50S ribosomal subunit.

This Rhodococcus erythropolis (strain PR4 / NBRC 100887) protein is Large ribosomal subunit protein uL30.